Here is a 461-residue protein sequence, read N- to C-terminus: Signal recognition particle receptor FtsY (461 aa).

Residues 105–138 form a TPR repeat; it reads FESLYNVAKIYHQLEKPDKALEYAQRAEKLVPYE. Residues 267-274, 349-353, and 413-416 contribute to the GTP site; these read GVNGSGKT, DTAGR, and TKLD.

It belongs to the GTP-binding SRP family. FtsY subfamily. In terms of assembly, part of the signal recognition particle protein translocation system, which is composed of SRP and FtsY.

Its subcellular location is the cell inner membrane. It localises to the cytoplasm. It carries out the reaction GTP + H2O = GDP + phosphate + H(+). Involved in targeting and insertion of nascent membrane proteins into the cytoplasmic membrane. Acts as a receptor for the complex formed by the signal recognition particle (SRP) and the ribosome-nascent chain (RNC). This Aquifex aeolicus (strain VF5) protein is Signal recognition particle receptor FtsY.